The sequence spans 215 residues: Kinetochore protein Spc25 (215 aa).

Positions 43–114 (DNLLTAMEKA…MECIHALKRA (72 aa)) form a coiled coil.

Belongs to the SPC25 family. As to quaternary structure, component of the Ndc80 complex, which is composed of Ndc80, Nuf2 and Spc25.

The protein localises to the nucleus. It is found in the chromosome. Its subcellular location is the centromere. It localises to the kinetochore. Acts as a component of the essential kinetochore-associated Ndc80 complex, which is required for chromosome segregation and spindle checkpoint activity during meiosis and mitosis. Required for kinetochore integrity and the organization of stable microtubule binding sites in the outer plate of the kinetochore. Participates in SAC signaling that responds specifically to disruptions in spindle microtubule dynamics. The NDC80 complex synergistically enhances the affinity of the SKA1 complex for microtubules and may allow the NDC80 complex to track depolymerizing microtubules. In Drosophila ananassae (Fruit fly), this protein is Kinetochore protein Spc25.